We begin with the raw amino-acid sequence, 51 residues long: uncharacterized protein (51 aa).

The interval 1 to 51 (MARTNVKLCPPKRSKRPSNSRSKSTSHSNRRSLNSLRRTRTSRRSNNGKFT) is disordered. Residues 19-36 (NSRSKSTSHSNRRSLNSL) show a composition bias toward low complexity.

This is an uncharacterized protein from Bdellovibrio bacteriovorus (Bacteriophage phiMH2K).